The primary structure comprises 1393 residues: DNA glycosylase/AP lyase ROS1 (1393 aa).

3 disordered regions span residues 1-25 (MEKQRREESSFQQPPWIPQTPMKPF), 98-186 (SLSS…TSTR), and 237-265 (LSAPSTPKRKRSQGKRKGVQPKKNGSNLE). A compositionally biased stretch (low complexity) spans 98 to 108 (SLSSVSNNVAE). Positions 117–126 (PKRKKHRPKV) are enriched in basic residues. 2 stretches are compositionally biased toward basic and acidic residues: residues 127–138 (RREAKPKREPKP) and 162–171 (KKVEVSKDQD). The segment covering 243–256 (PKRKRSQGKRKGVQ) has biased composition (basic residues). A DEMETER region spans residues 528 to 626 (KVDLDDETDR…AFMSLASQFP (99 aa)). Polar residues predominate over residues 653–672 (EETMSSPPDHNHSSVTLKNT). Disordered regions lie at residues 653–722 (EETM…SVEV) and 789–830 (SNQV…CSQQ). Positions 687-698 (SRSSSEIAISAH) are enriched in low complexity. Residues 699–722 (ESVDKTTDSKEYVDSDRKGSSVEV) are compositionally biased toward basic and acidic residues. The segment covering 816–830 (KSSVDSSEPGCCSQQ) has biased composition (polar residues). A Glycyl lysine isopeptide (Lys-Gly) (interchain with G-Cter in ubiquitin) cross-link involves residue lysine 901. 4 residues coordinate [4Fe-4S] cluster: cysteine 1038, cysteine 1045, cysteine 1048, and cysteine 1054.

Belongs to the DNA glycosylase family. DEMETER subfamily. As to quaternary structure, interacts (via the central region) with ZDP. Binds to RPA2A. Interacts with XRCC1. Interacts probably with a complex made of MBD7, IDM1, IDM2 and IDM3. Interacts with APE1L. [4Fe-4S] cluster serves as cofactor. In terms of tissue distribution, expressed ubiquitously in both vegetative and reproductive organs.

Its subcellular location is the nucleus. It is found in the nucleolus. It catalyses the reaction 2'-deoxyribonucleotide-(2'-deoxyribose 5'-phosphate)-2'-deoxyribonucleotide-DNA = a 3'-end 2'-deoxyribonucleotide-(2,3-dehydro-2,3-deoxyribose 5'-phosphate)-DNA + a 5'-end 5'-phospho-2'-deoxyribonucleoside-DNA + H(+). Its activity is regulated as follows. Stimulated by ZDP. Stimulated by XRCC1. In terms of biological role, bifunctional DNA glycosylase/lyase, which excises 5-methylcytosine (5-meC) and 5-hydroxymethylcytosine (5-hmeC), leaving an apyrimidinic (AP) site that is subsequently incised by the lyase activity. Generates 3'-phosphor-alpha,beta-unsaturated aldehyde (3'-PUA) as a primary 5-meC excision intermediate. Prevents DNA hypermethylation, specifically in the promoter of otherwise silenced loci. May be involved in DNA repair through its nicking activity on methylated DNA. Binds with similar affinity to both methylated and non-methylated DNA. Highly distributive behavior on DNA substrates containing multiple 5-meC residues. Involved with Pol IV in the remodeling of the 5S rDNA chromatin via DNA methylation modifications during the first days of development post-germination. Participates in UV-B induced- and oxidative DNA damage repair. This chain is DNA glycosylase/AP lyase ROS1, found in Arabidopsis thaliana (Mouse-ear cress).